The sequence spans 67 residues: MKAKELRDLTSEELMNKLNDFKSELFSLRFQLATGQLENTARIKFVKKDIAKVKTVLAERKLYETRA.

It belongs to the universal ribosomal protein uL29 family.

The chain is Large ribosomal subunit protein uL29 from Clostridioides difficile (strain 630) (Peptoclostridium difficile).